Reading from the N-terminus, the 264-residue chain is Short chain dehydrogenase/reductase AacuN (264 aa).

Residues Ile-24, Asp-70, Asn-97, and Arg-130 each contribute to the NADP(+) site. Catalysis depends on proton donor residues Ser-146, Ser-147, and Tyr-161. Positions 161, 165, and 196 each coordinate NADP(+). Lys-165 (lowers pKa of active site Tyr) is an active-site residue.

The protein belongs to the short-chain dehydrogenases/reductases (SDR) family.

The enzyme catalyses 3,8,9,10-tetrahydroxy-6-methyl-1,4-dihydroanthracen-1-one + NADPH + H(+) = (3R)-3,8,9,10-tetrahydroxy-6-methyl-1,2,3,4-tetrahydroanthracen-1-one + NADP(+). Its pathway is secondary metabolite biosynthesis. Its function is as follows. Atrochrysone carboxylic acid synthase; part of the gene cluster that mediates the biosynthesis of the tetrahydroxanthone dimer secalonic acid D. The pathway begins with the synthesis of atrochrysone thioester by the polyketide synthase AacuL. The atrochrysone carboxyl ACP thioesterase AacuM then breaks the thioester bond and releases the atrochrysone carboxylic acid from AacuL. Atrochrysone carboxylic acid is decarboxylated by the decarboxylase AacuI, and oxidized by the anthrone oxygenase AacuG to yield emodin. Emodin is then reduced to emodin hydroquinone by a yet unidentified oxidoreductase. A-ring reduction by the short chain dehydrogenase AacuN, dehydration by the scytalone dehydratase-like protein AacuK and probable spontaneous re-oxidation, results in overall deoxygenation to chrysophanol. Baeyer-Villiger oxidation by the Baeyer-Villiger monooxygenase (BVMO) AacuH then yields monodictyphenone. Monodictyphenone is transformed into compounds with the tetrahydroxanthone skeleton via methylesterification by the methyltransferase AacuQ, followed by the action of the flavin-dependent monooxygenase AacuC, the isomerase AacuP, and the short chain dehydrogenase/reductase AacuF or AacuD. AacuF and AacuD should accept the same compound as a substrate but perform the ketoreduction with a different stereoselectivity, thus yielding blennolides B and A, respectively. In the final step of the biosynthesis, the cytochrome P450 monooxygenase AacuE accepts blennolide B and/or blennolide A to conduct the dimerization reaction to furnish the tetrahydroxanthone dimers, secalonic acids D, B, and F. The chain is Short chain dehydrogenase/reductase AacuN from Aspergillus aculeatus (strain ATCC 16872 / CBS 172.66 / WB 5094).